The primary structure comprises 616 residues: Dihydroxy-acid dehydratase (616 aa).

A Mg(2+)-binding site is contributed by Asp-81. Cys-122 contributes to the [2Fe-2S] cluster binding site. Mg(2+) is bound by residues Asp-123 and Lys-124. Lys-124 carries the N6-carboxylysine modification. Cys-195 is a [2Fe-2S] cluster binding site. Residue Glu-491 coordinates Mg(2+). Ser-517 serves as the catalytic Proton acceptor.

It belongs to the IlvD/Edd family. Homodimer. Requires [2Fe-2S] cluster as cofactor. Mg(2+) is required as a cofactor.

The enzyme catalyses (2R)-2,3-dihydroxy-3-methylbutanoate = 3-methyl-2-oxobutanoate + H2O. It catalyses the reaction (2R,3R)-2,3-dihydroxy-3-methylpentanoate = (S)-3-methyl-2-oxopentanoate + H2O. The protein operates within amino-acid biosynthesis; L-isoleucine biosynthesis; L-isoleucine from 2-oxobutanoate: step 3/4. Its pathway is amino-acid biosynthesis; L-valine biosynthesis; L-valine from pyruvate: step 3/4. Functionally, functions in the biosynthesis of branched-chain amino acids. Catalyzes the dehydration of (2R,3R)-2,3-dihydroxy-3-methylpentanoate (2,3-dihydroxy-3-methylvalerate) into 2-oxo-3-methylpentanoate (2-oxo-3-methylvalerate) and of (2R)-2,3-dihydroxy-3-methylbutanoate (2,3-dihydroxyisovalerate) into 2-oxo-3-methylbutanoate (2-oxoisovalerate), the penultimate precursor to L-isoleucine and L-valine, respectively. The sequence is that of Dihydroxy-acid dehydratase from Salmonella paratyphi A (strain ATCC 9150 / SARB42).